The following is a 260-amino-acid chain: Snake venom serine protease homolog (260 aa).

An N-terminal signal peptide occupies residues 1-18 (MVLIRVLANLLILQLSYA). Positions 19 to 24 (QKASEL) are excised as a propeptide. In terms of domain architecture, Peptidase S1 spans 25 to 251 (IIGGDECNIN…YTEWIRSIIA (227 aa)). 6 cysteine pairs are disulfide-bonded: C31-C165, C52-C68, C100-C258, C144-C212, C176-C191, and C202-C227. N83 carries an N-linked (GlcNAc...) asparagine glycan.

This sequence belongs to the peptidase S1 family. Snake venom subfamily. In terms of tissue distribution, expressed by the venom gland.

The protein resides in the secreted. In terms of biological role, snake venom serine protease homolog that may act in the hemostasis system of the prey. The chain is Snake venom serine protease homolog from Bothrops jararacussu (Jararacussu).